A 70-amino-acid polypeptide reads, in one-letter code: Small ribosomal subunit protein bS21 (70 aa).

The protein belongs to the bacterial ribosomal protein bS21 family.

This is Small ribosomal subunit protein bS21 from Campylobacter hominis (strain ATCC BAA-381 / DSM 21671 / CCUG 45161 / LMG 19568 / NCTC 13146 / CH001A).